The chain runs to 523 residues: MAAEREPPPLGDGKPTDFEDLEDGEDLFTSTVSTLESSPSSPEPTSLPAEDISANSNGPKPTEVVLDDDREDLFAEATEEVSLDSPEREPILSSEPSPAVTPVTPTTLIAPRIESKSMSAPVIFDRSREEIEEEANGDIFDIEIGVSDPEKVGDGMNAYMAYRVTTKTSLSMFSKSEFSVKRRFSDFLGLHSKLASKYLHVGYIVPPAPEKSIVGMTKVKVGKEDSSSTEFVEKRRAALERYLQRTVKHPTLLQDPDLRQFLESSELPRAVNTQALSGAGILRMVNKAADAVNKMTIKMNESDAWFEEKQQQFENLDQQLRKLHASVEALVCHRKELSANTAAFAKSAAMLGNSEDHTALSRALSQLAEVEEKIDQLHQEQAFADFYMFSELLSDYIRLIAAVKGVFDHRMKCWQKWEDAQITLLKKREAEAKMMVANKPDKIQQAKNEIREEIEEWEAKVQQGERDFEQISKTIRKEVGRFEKERVKDFKTVIIKYLESLVQTQQQLIKYWEAFLPEAKAIA.

The segment at 1-104 (MAAEREPPPL…EPSPAVTPVT (104 aa)) is disordered. Composition is skewed to low complexity over residues 27 to 48 (LFTSTVSTLESSPSSPEPTSLP) and 93 to 104 (SSEPSPAVTPVT). Ser97 bears the Phosphoserine mark. A phosphothreonine mark is found at Thr101 and Thr104. Residues Ser117 and Ser119 each carry the phosphoserine modification. The PX domain maps to 140–269 (FDIEIGVSDP…QFLESSELPR (130 aa)). A 1,2-diacyl-sn-glycero-3-phospho-(1D-myo-inositol-3-phosphate) is bound by residues Arg183, Ser185, Lys211, and Arg235. Ser185 is subject to Phosphoserine. Residues 260–523 (QFLESSELPR…AFLPEAKAIA (264 aa)) are interaction with RhoG. A Phosphoserine modification is found at Ser277. The membrane-binding amphipathic helix stretch occupies residues 278–295 (GAGILRMVNKAADAVNKM). Residues 299 to 523 (MNESDAWFEE…AFLPEAKAIA (225 aa)) form the BAR domain. Position 473 is an N6-acetyllysine (Lys473).

The protein belongs to the sorting nexin family. In terms of assembly, predominantly forms heterodimers with BAR domain-containing sorting nexins SNX5, SNX6 and SNX32; can self-associate to form homodimers. The heterodimers are proposed to self-assemble into helical arrays on the membrane to stabilize and expand local membrane curvature underlying endosomal tubule formation. Thought to be a component of the originally described retromer complex (also called SNX-BAR retromer) which is a pentamer containing the heterotrimeric retromer cargo-selective complex (CSC), also described as vacuolar protein sorting subcomplex (VPS), and a heterodimeric membrane-deforming subcomplex formed between SNX1 or SNX2 and SNX5 or SNX6 (also called SNX-BAR subcomplex); the respective CSC and SNX-BAR subcomplexes associate with low affinity. Interacts with SNX5, SNX6, SNX32, VPS26A, VPS29, VPS35, FNBP1, KALRN, RHOG (GDP-bound form).

Its subcellular location is the early endosome membrane. It is found in the cell projection. It localises to the lamellipodium. Functionally, involved in several stages of intracellular trafficking. Interacts with membranes containing phosphatidylinositol 3-phosphate (PtdIns(3P)) or phosphatidylinositol 3,5-bisphosphate (PtdIns(3,5)P2). Acts in part as component of the retromer membrane-deforming SNX-BAR subcomplex. The SNX-BAR retromer mediates retrograde transport of cargo proteins from endosomes to the trans-Golgi network (TGN) and is involved in endosome-to-plasma membrane transport for cargo protein recycling. The SNX-BAR subcomplex functions to deform the donor membrane into a tubular profile called endosome-to-TGN transport carrier (ETC). Can sense membrane curvature and has in vitro vesicle-to-membrane remodeling activity. Required for retrograde endosome-to-TGN transport of TGN38. Promotes KALRN- and RHOG-dependent but retromer-independent membrane remodeling such as lamellipodium formation; the function is dependent on GEF activity of KALRN. The chain is Sorting nexin-2 (SNX2) from Pongo abelii (Sumatran orangutan).